A 1892-amino-acid polypeptide reads, in one-letter code: Plexin A3 (1892 aa).

A signal peptide spans 1–20 (MRSLWLLVFSFSVLTGTNMA). A Sema domain is found at 21–509 (FPMILSERPE…SDKQVSRLPV (489 aa)). Over 21-1240 (FPMILSERPE…IYSDSTLTLP (1220 aa)) the chain is Extracellular. Asn68 carries N-linked (GlcNAc...) asparagine glycosylation. 9 cysteine pairs are disulfide-bonded: Cys86–Cys95, Cys121–Cys129, Cys283–Cys404, Cys299–Cys355, Cys373–Cys392, Cys512–Cys529, Cys518–Cys560, Cys521–Cys538, and Cys532–Cys544. The N-linked (GlcNAc...) asparagine glycan is linked to Asn569. Residues Cys595 and Cys615 are joined by a disulfide bond. IPT/TIG domains lie at 861–955 (PRIT…YSFV), 957–1041 (PSFS…YIYT), 1044–1143 (PNIS…FTYY), and 1146–1232 (PTFE…LHIY). Asn1183 carries N-linked (GlcNAc...) asparagine glycosylation. A helical membrane pass occupies residues 1241 to 1261 (AIIGIGAGGGVLLIAIIAVLI). A coiled-coil region spans residues 1262–1315 (AYKRKTRDADRTLKRLQLQMDNLESRVALECKEAFAELQTDIQELTNDMDGVKI). Topologically, residues 1262–1892 (AYKRKTRDAD…QAINLMSGSS (631 aa)) are cytoplasmic.

Belongs to the plexin family. Detected in primary motor neurons in the embryonic nervous system.

It is found in the cell membrane. In terms of biological role, coreceptor for class 3 semaphorins. Necessary for signaling by class 3 semaphorins and subsequent remodeling of the cytoskeleton. Plays a role in axon guidance in the developing nervous system. Class 3 semaphorins bind to a complex composed of a neuropilin and a plexin. The plexin modulates the affinity of the complex for specific semaphorins, and its cytoplasmic domain is required for the activation of down-stream signaling events in the cytoplasm. This Danio rerio (Zebrafish) protein is Plexin A3 (plxna3).